Reading from the N-terminus, the 76-residue chain is Conotoxin PnMKLT1-1111 (76 aa).

Residues 1 to 22 (MKLTCMMIVAVLFLTAWTVVTA) form the signal peptide. The propeptide occupies 23 to 50 (VPHSNKRLANLYLKARHEMKNPEASNVD). Cystine bridges form between cysteine 53–cysteine 67, cysteine 60–cysteine 71, and cysteine 66–cysteine 75.

This sequence belongs to the conotoxin O1 superfamily. As to expression, expressed by the venom duct.

The protein localises to the secreted. The sequence is that of Conotoxin PnMKLT1-1111 from Conus pennaceus (Feathered cone).